The sequence spans 615 residues: Chaperone protein HscA homolog (615 aa).

This sequence belongs to the heat shock protein 70 family.

Functionally, chaperone involved in the maturation of iron-sulfur cluster-containing proteins. Has a low intrinsic ATPase activity which is markedly stimulated by HscB. The protein is Chaperone protein HscA homolog of Aeromonas hydrophila subsp. hydrophila (strain ATCC 7966 / DSM 30187 / BCRC 13018 / CCUG 14551 / JCM 1027 / KCTC 2358 / NCIMB 9240 / NCTC 8049).